Consider the following 529-residue polypeptide: Peptide chain release factor 3 (529 aa).

Residues Ala11–Met280 form the tr-type G domain. GTP contacts are provided by residues Ser20–Thr27, Asp88–His92, and Asn142–Asp145.

Belongs to the TRAFAC class translation factor GTPase superfamily. Classic translation factor GTPase family. PrfC subfamily.

It is found in the cytoplasm. Functionally, increases the formation of ribosomal termination complexes and stimulates activities of RF-1 and RF-2. It binds guanine nucleotides and has strong preference for UGA stop codons. It may interact directly with the ribosome. The stimulation of RF-1 and RF-2 is significantly reduced by GTP and GDP, but not by GMP. This is Peptide chain release factor 3 from Yersinia pseudotuberculosis serotype O:1b (strain IP 31758).